The following is a 381-amino-acid chain: Creatine kinase B-type (381 aa).

S4 is modified (phosphoserine). Positions 11–98 (KLRFPAEDEF…FDPIIEDRHG (88 aa)) constitute a Phosphagen kinase N-terminal domain. T35 is subject to Phosphothreonine. A Glycyl lysine isopeptide (Lys-Gly) (interchain with G-Cter in ubiquitin) cross-link involves residue K45. Position 72 (V72) interacts with creatine. The segment covering 96 to 110 (RHGGYKPSDEHKTDL) has biased composition (basic and acidic residues). The disordered stretch occupies residues 96 to 122 (RHGGYKPSDEHKTDLNPDNLQGGDDLD). Glycyl lysine isopeptide (Lys-Gly) (interchain with G-Cter in ubiquitin) cross-links involve residues K101 and K107. Y125 is modified (phosphotyrosine). The Phosphagen kinase C-terminal domain occupies 125-367 (YVLSSRVRTG…KLLIEMEQRL (243 aa)). Residues 128 to 132 (SSRVR), R130, R132, and H191 each bind ATP. Positions 130–138 (RVRTGRSIR) are internal MTS-like signal. Residue S199 is modified to Phosphoserine. E232 serves as a coordination point for creatine. ATP is bound at residue R236. Y269 carries the 3'-nitrotyrosine modification. S285 provides a ligand contact to creatine. An ATP-binding site is contributed by R292. The residue at position 309 (S309) is a Phosphoserine. ATP-binding positions include R320, 320 to 325 (RGTGGV), and D335. The residue at position 322 (T322) is a Phosphothreonine. Residue K381 forms a Glycyl lysine isopeptide (Lys-Gly) (interchain with G-Cter in ubiquitin) linkage.

Belongs to the ATP:guanido phosphotransferase family. Dimer of identical or non-identical chains, which can be either B (brain type) or M (muscle type). With MM being the major form in skeletal muscle and myocardium, MB existing in myocardium, and BB existing in many tissues, especially brain. Interacts with SLC12A6 (via C-terminus); the interaction may be required for SLC12A6 potassium-chloride cotransport activity. Post-translationally, ubiquitinated by the ECS(ASB9) complex, leading to its degradation by the proteasome.

The protein localises to the cytoplasm. It is found in the cytosol. It localises to the mitochondrion. Its subcellular location is the cell membrane. The catalysed reaction is creatine + ATP = N-phosphocreatine + ADP + H(+). Its function is as follows. Reversibly catalyzes the transfer of phosphate between ATP and various phosphogens (e.g. creatine phosphate). Creatine kinase isoenzymes play a central role in energy transduction in tissues with large, fluctuating energy demands, such as skeletal muscle, heart, brain and spermatozoa. Acts as a key regulator of adaptive thermogenesis as part of the futile creatine cycle: localizes to the mitochondria of thermogenic fat cells and acts by mediating phosphorylation of creatine to initiate a futile cycle of creatine phosphorylation and dephosphorylation. During the futile creatine cycle, creatine and N-phosphocreatine are in a futile cycle, which dissipates the high energy charge of N-phosphocreatine as heat without performing any mechanical or chemical work. The chain is Creatine kinase B-type from Homo sapiens (Human).